We begin with the raw amino-acid sequence, 1747 residues long: E3 ubiquitin-protein ligase listerin (1747 aa).

A disordered region spans residues 1–24 (MGGKTKQAPRTKNNAKPSSSSRTA). Residues 8-24 (APRTKNNAKPSSSSRTA) are compositionally biased toward polar residues. HEAT repeat units follow at residues 65-102 (AAISPQTQIILRKLSKKDPMTKKKALQELHELIEQSDV), 106-144 (KNILPLWPKYYLNLASDPEHTVREQTQTVLQLLMAKCKK), 346-383 (NIRKTLLPKLSSLLQNGFNRNAQAICPNLLPFLSKVTQ), 424-461 (NAYFECLRFLMQQINNNKQREQKEEEFSFSLLDNNVLE), and 508-547 (KFWIRIFELVTQDLSAEEVNEQLLGHVLLLVQDLHMANPS). A Phosphoserine modification is found at Ser566. HEAT repeat units follow at residues 612–653 (SRYI…LLGQ), 664–711 (EIVF…CAEA), 789–825 (SFIAQIMPVICSNNNSSLHVRQHIFLKLFKFSLEHRP), 952–989 (LSRNEILPLLQRSTLNFSTIYKLVYQFPPPQDTNDPED), 1005–1042 (KWNEPLIAELLQCIRVAGTAECWLEMSVLQSSTEELVL), 1053–1090 (GNSSDLVAIVKERLQQAAVQQSSVIDCRLLSYLRFCPQ), 1129–1166 (KLSQKAITLSSAIMGTEPPEIWVKAAVFHALLLNNFEG), 1216–1258 (VEFI…SIAQ), 1269–1307 (VAVYELFAALIDFIRSEKQKSSTELLKNMIDEWDSLFAK), 1330–1363 (FQACYEALLEQITPVIERLDYSFVYSFCKSNSNI), 1364–1400 (TLDHLCNFLFKQLYSVQHSVRLSAVHSLRQLTPHFVA), and 1500–1539 (ENFLHFLFRAMPVDILKNHGAKVHSNGVYKELTWSQQKDR). Residues 1697–1744 (CYVCYTVIHQETCQLPKLTCKTCKKKFHGPCLYKWFTTSSKSTCPICR) form an RING-type zinc finger.

It belongs to the LTN1 family. In terms of assembly, component of the ribosome quality control complex (RQC), composed of at least the E3 ubiquitin ligase l(3)76BDr/LTN1 and Clbn/NEMF. The complex probably also contains TCF25 as well as TER94/VCP and its ubiquitin-binding cofactors. RQC forms a stable complex with 60S ribosomal subunits.

It localises to the cytoplasm. The protein localises to the cytosol. The catalysed reaction is S-ubiquitinyl-[E2 ubiquitin-conjugating enzyme]-L-cysteine + [acceptor protein]-L-lysine = [E2 ubiquitin-conjugating enzyme]-L-cysteine + N(6)-ubiquitinyl-[acceptor protein]-L-lysine.. Its pathway is protein modification; protein ubiquitination. In terms of biological role, E3 ubiquitin-protein ligase component of the ribosome quality control complex (RQC), a ribosome-associated complex that mediates ubiquitination and extraction of incompletely synthesized nascent chains for proteasomal degradation. Ubiquitination leads to TER94/VCP recruitment for extraction and degradation of the incomplete translation product. The polypeptide is E3 ubiquitin-protein ligase listerin (Drosophila melanogaster (Fruit fly)).